The primary structure comprises 246 residues: Octanoyltransferase (246 aa).

The BPL/LPL catalytic domain maps to Asp54 to Ile240. Substrate is bound by residues Arg96–His103, Ala163–Gly165, and Gly176–Ala178. Cys194 functions as the Acyl-thioester intermediate in the catalytic mechanism.

Belongs to the LipB family.

The protein resides in the cytoplasm. The catalysed reaction is octanoyl-[ACP] + L-lysyl-[protein] = N(6)-octanoyl-L-lysyl-[protein] + holo-[ACP] + H(+). It functions in the pathway protein modification; protein lipoylation via endogenous pathway; protein N(6)-(lipoyl)lysine from octanoyl-[acyl-carrier-protein]: step 1/2. Functionally, catalyzes the transfer of endogenously produced octanoic acid from octanoyl-acyl-carrier-protein onto the lipoyl domains of lipoate-dependent enzymes. Lipoyl-ACP can also act as a substrate although octanoyl-ACP is likely to be the physiological substrate. This chain is Octanoyltransferase, found in Synechococcus sp. (strain WH7803).